A 997-amino-acid polypeptide reads, in one-letter code: Mannuronan C5-epimerase AlgE2 (997 aa).

7 PbH1 repeats span residues 133–155, 157–179, 180–202, 204–226, 257–279, 280–315, and 320–359; these read DRDV…DPHE, TINL…VADF, QIGG…NIVT, TNDF…VVQR, AHDV…RVYG, AEDV…GVSG, and TTGT…SVSN. Hemolysin-type calcium-binding repeat units follow at residues 388–403, 406–422, 424–439, 557–573, 574–591, 696–711, 713–730, 828–839, 846–862, and 864–880; these read GTAG…AHET, GLDG…NDIL, GGAG…GADL, GHAG…DDIL, VGGA…ADVF, GSAG…ADEV, HGGG…ADVF, GGDGNDTLSGSS, GGVG…NDIL, and GGAG…SDIF.

The protein belongs to the D-mannuronate C5-epimerase family. Ca(2+) serves as cofactor.

It localises to the secreted. It carries out the reaction [(1-&gt;4)-beta-D-mannuronosyl](n) = [alginate](n). It functions in the pathway glycan biosynthesis; alginate biosynthesis. With respect to regulation, inhibited by zinc. Its function is as follows. Converts beta-D-mannuronic acid (M) to alpha-L-guluronic acid (G), producing a polymer with gel-forming capacity, required for the formation of the cyst coat. This is Mannuronan C5-epimerase AlgE2 from Azotobacter vinelandii.